The sequence spans 200 residues: MGNGLSDQTSILSNLPSFQSFHIVILGLDCAGKTTVLYRLQFNEFVNTVPTKGFNTEKIKVTLGNSKTVTFHFWDVGGQEKLRPLWKSYTRCTDGIVFVVDSVDVERMEEAKTELHKITRISENQGVPVLIVANKQDLRNSLSLSEIEKLLAMGELSSSTPWHLQPTCAIIGDGLKEGLEKLHDMIIKRRKMLRQQKKKR.

Glycine 2 carries N-myristoyl glycine lipidation. Residues 27–34, 75–79, and 134–137 each bind GTP; these read GLDCAGKT, DVGGQ, and NKQD.

This sequence belongs to the small GTPase superfamily. Arf family. Interacts with CYTH2. Interacts with KPNA2; the interaction is direct. Does not interact with ARL4A. Myristoylated.

It is found in the cell membrane. It localises to the cytoplasm. The protein localises to the nucleus. Its subcellular location is the nucleolus. Its function is as follows. Small GTP-binding protein which cycles between an inactive GDP-bound and an active GTP-bound form, and the rate of cycling is regulated by guanine nucleotide exchange factors (GEF) and GTPase-activating proteins (GAP). GTP-binding protein that does not act as an allosteric activator of the cholera toxin catalytic subunit. Recruits CYTH1, CYTH2, CYTH3 and CYTH4 to the plasma membrane in GDP-bound form. This is ADP-ribosylation factor-like protein 4A (ARL4A) from Homo sapiens (Human).